Here is a 138-residue protein sequence, read N- to C-terminus: Nucleoside diphosphate kinase (138 aa).

Residues lysine 9, phenylalanine 57, arginine 85, threonine 91, arginine 102, and asparagine 112 each coordinate ATP. Histidine 120 (pros-phosphohistidine intermediate) is an active-site residue.

It belongs to the NDK family. Homotetramer. Requires Mg(2+) as cofactor.

It localises to the cytoplasm. The enzyme catalyses a 2'-deoxyribonucleoside 5'-diphosphate + ATP = a 2'-deoxyribonucleoside 5'-triphosphate + ADP. The catalysed reaction is a ribonucleoside 5'-diphosphate + ATP = a ribonucleoside 5'-triphosphate + ADP. In terms of biological role, major role in the synthesis of nucleoside triphosphates other than ATP. The ATP gamma phosphate is transferred to the NDP beta phosphate via a ping-pong mechanism, using a phosphorylated active-site intermediate. The chain is Nucleoside diphosphate kinase from Streptococcus agalactiae serotype III (strain NEM316).